The sequence spans 70 residues: Cytochrome c oxidase subunit 8B, mitochondrial (70 aa).

A mitochondrion-targeting transit peptide spans 1-24 (MLSLRPALRLLQAPLRCWAVPKAH). Residues 25–35 (VSAKPAETPTS) lie on the Mitochondrial matrix side of the membrane. The helical transmembrane segment at 36–59 (PAEQAVGLSFIFITFLGPAGWILS) threads the bilayer. Residues 60 to 70 (HVENYKKRPRA) are Mitochondrial intermembrane-facing.

Belongs to the cytochrome c oxidase VIII family. In terms of assembly, component of the cytochrome c oxidase (complex IV, CIV), a multisubunit enzyme composed of 14 subunits. The complex is composed of a catalytic core of 3 subunits MT-CO1, MT-CO2 and MT-CO3, encoded in the mitochondrial DNA, and 11 supernumerary subunits COX4I, COX5A, COX5B, COX6A, COX6B, COX6C, COX7A, COX7B, COX7C, COX8 and NDUFA4, which are encoded in the nuclear genome. The complex exists as a monomer or a dimer and forms supercomplexes (SCs) in the inner mitochondrial membrane with NADH-ubiquinone oxidoreductase (complex I, CI) and ubiquinol-cytochrome c oxidoreductase (cytochrome b-c1 complex, complex III, CIII), resulting in different assemblies (supercomplex SCI(1)III(2)IV(1) and megacomplex MCI(2)III(2)IV(2)).

The protein localises to the mitochondrion inner membrane. It participates in energy metabolism; oxidative phosphorylation. Component of the cytochrome c oxidase, the last enzyme in the mitochondrial electron transport chain which drives oxidative phosphorylation. The respiratory chain contains 3 multisubunit complexes succinate dehydrogenase (complex II, CII), ubiquinol-cytochrome c oxidoreductase (cytochrome b-c1 complex, complex III, CIII) and cytochrome c oxidase (complex IV, CIV), that cooperate to transfer electrons derived from NADH and succinate to molecular oxygen, creating an electrochemical gradient over the inner membrane that drives transmembrane transport and the ATP synthase. Cytochrome c oxidase is the component of the respiratory chain that catalyzes the reduction of oxygen to water. Electrons originating from reduced cytochrome c in the intermembrane space (IMS) are transferred via the dinuclear copper A center (CU(A)) of subunit 2 and heme A of subunit 1 to the active site in subunit 1, a binuclear center (BNC) formed by heme A3 and copper B (CU(B)). The BNC reduces molecular oxygen to 2 water molecules using 4 electrons from cytochrome c in the IMS and 4 protons from the mitochondrial matrix. The protein is Cytochrome c oxidase subunit 8B, mitochondrial (COX8B) of Ateles belzebuth (White-bellied spider monkey).